The chain runs to 225 residues: PKHD-type hydroxylase YbiX (225 aa).

Positions 78-177 (TLSTPLFNRY…RVASFMWIQS (100 aa)) constitute a Fe2OG dioxygenase domain. Residues His-96, Asp-98, and His-158 each coordinate Fe cation. Arg-168 provides a ligand contact to 2-oxoglutarate.

Fe(2+) serves as cofactor. Requires L-ascorbate as cofactor.

The protein is PKHD-type hydroxylase YbiX of Shigella boydii serotype 18 (strain CDC 3083-94 / BS512).